Consider the following 274-residue polypeptide: Large ribosomal subunit protein uL2 (274 aa).

The tract at residues 224–254 is disordered; that stretch reads AMNPVDHPHGGGEGRTGEGQAPVSPWNTLTK. Basic and acidic residues predominate over residues 229–239; that stretch reads DHPHGGGEGRT.

It belongs to the universal ribosomal protein uL2 family. In terms of assembly, part of the 50S ribosomal subunit. Forms a bridge to the 30S subunit in the 70S ribosome.

In terms of biological role, one of the primary rRNA binding proteins. Required for association of the 30S and 50S subunits to form the 70S ribosome, for tRNA binding and peptide bond formation. It has been suggested to have peptidyltransferase activity; this is somewhat controversial. Makes several contacts with the 16S rRNA in the 70S ribosome. The polypeptide is Large ribosomal subunit protein uL2 (Leptothrix cholodnii (strain ATCC 51168 / LMG 8142 / SP-6) (Leptothrix discophora (strain SP-6))).